The chain runs to 800 residues: DNA topoisomerase 4 subunit A (800 aa).

Positions 31 to 495 (LPDVRDGLKP…EIEEIKIDKE (465 aa)) constitute a Topo IIA-type catalytic domain. Tyr119 serves as the catalytic O-(5'-phospho-DNA)-tyrosine intermediate.

It belongs to the type II topoisomerase GyrA/ParC subunit family. ParC type 2 subfamily. In terms of assembly, heterotetramer composed of ParC and ParE.

It is found in the cell membrane. It catalyses the reaction ATP-dependent breakage, passage and rejoining of double-stranded DNA.. In terms of biological role, topoisomerase IV is essential for chromosome segregation. It relaxes supercoiled DNA. Performs the decatenation events required during the replication of a circular DNA molecule. This is DNA topoisomerase 4 subunit A from Staphylococcus aureus (strain N315).